Consider the following 349-residue polypeptide: DNA fragmentation factor subunit beta (349 aa).

One can recognise a CIDE-N domain in the interval 7 to 83 (QPKCVKLRAL…LLTAGETWHG (77 aa)). Residues 319-349 (RSRIYRPQTGSRRKQPPRKQPPRKRPPRKRQ) are disordered. Over residues 329 to 349 (SRRKQPPRKQPPRKRPPRKRQ) the composition is skewed to basic residues.

Heterodimer of DFFA and DFFB. Interacts with H1-1.

It localises to the cytoplasm. It is found in the nucleus. With respect to regulation, inhibited by DFFA (DFF45). In terms of biological role, nuclease that induces DNA fragmentation and chromatin condensation during apoptosis. Degrades naked DNA and induces apoptotic morphology. The sequence is that of DNA fragmentation factor subunit beta (Dffb) from Rattus norvegicus (Rat).